A 515-amino-acid chain; its full sequence is Ribonuclease Y (515 aa).

Residues 6 to 26 traverse the membrane as a helical segment; sequence LTSFVIITLSLAVGLTGGYYG. The 86-residue stretch at 205-290 folds into the KH domain; it reads TVSVVPLPND…EMVEKARKEI (86 aa). The 94-residue stretch at 331–424 folds into the HD domain; it reads VLRHSVEVAH…VQAADAISAS (94 aa).

Belongs to the RNase Y family.

It is found in the cell membrane. Functionally, endoribonuclease that initiates mRNA decay. This Syntrophomonas wolfei subsp. wolfei (strain DSM 2245B / Goettingen) protein is Ribonuclease Y.